A 337-amino-acid polypeptide reads, in one-letter code: Protein OPG055 (337 aa).

This sequence belongs to the orthopoxvirus OPG055 family.

Functionally, stimulates increases in peripheral microtubule dynamics and may increase the motility of the infected cells, contributing to cell-to-cell spread of the virus. Seems to inhibit the signaling via the GTPase RHOA and DIAPH1/mDia. The chain is Protein OPG055 (OPG055) from Homo sapiens (Human).